Consider the following 147-residue polypeptide: 3-dehydroquinate dehydratase (147 aa).

The Proton acceptor role is filled by tyrosine 24. Substrate contacts are provided by asparagine 74, histidine 80, and aspartate 87. The active-site Proton donor is the histidine 100. Residues 101-102 (LS) and arginine 111 contribute to the substrate site.

The protein belongs to the type-II 3-dehydroquinase family. In terms of assembly, homododecamer.

It carries out the reaction 3-dehydroquinate = 3-dehydroshikimate + H2O. It functions in the pathway metabolic intermediate biosynthesis; chorismate biosynthesis; chorismate from D-erythrose 4-phosphate and phosphoenolpyruvate: step 3/7. Functionally, catalyzes a trans-dehydration via an enolate intermediate. This chain is 3-dehydroquinate dehydratase, found in Azorhizobium caulinodans (strain ATCC 43989 / DSM 5975 / JCM 20966 / LMG 6465 / NBRC 14845 / NCIMB 13405 / ORS 571).